The primary structure comprises 342 residues: N-acetyl-gamma-glutamyl-phosphate reductase (342 aa).

Residue cysteine 148 is part of the active site.

The protein belongs to the NAGSA dehydrogenase family. Type 1 subfamily.

The protein localises to the cytoplasm. The catalysed reaction is N-acetyl-L-glutamate 5-semialdehyde + phosphate + NADP(+) = N-acetyl-L-glutamyl 5-phosphate + NADPH + H(+). The protein operates within amino-acid biosynthesis; L-arginine biosynthesis; N(2)-acetyl-L-ornithine from L-glutamate: step 3/4. In terms of biological role, catalyzes the NADPH-dependent reduction of N-acetyl-5-glutamyl phosphate to yield N-acetyl-L-glutamate 5-semialdehyde. The sequence is that of N-acetyl-gamma-glutamyl-phosphate reductase from Methanococcus vannielii (strain ATCC 35089 / DSM 1224 / JCM 13029 / OCM 148 / SB).